Reading from the N-terminus, the 358-residue chain is Probable D-xylulose reductase A (358 aa).

Residues Cys47, His72, and Glu73 each contribute to the Zn(2+) site. 182 to 187 lines the NAD(+) pocket; it reads GAGPVG.

It belongs to the zinc-containing alcohol dehydrogenase family. The cofactor is Zn(2+).

The enzyme catalyses xylitol + NAD(+) = D-xylulose + NADH + H(+). It functions in the pathway carbohydrate degradation; L-arabinose degradation via L-arabinitol; D-xylulose 5-phosphate from L-arabinose (fungal route): step 4/5. Functionally, xylitol dehydrogenase which catalyzes the conversion of xylitol to D-xylulose. Xylose is a major component of hemicelluloses such as xylan. Most fungi utilize D-xylose via three enzymatic reactions, xylose reductase (XR), xylitol dehydrogenase (XDH), and xylulokinase, to form xylulose 5-phosphate, which enters pentose phosphate pathway. The sequence is that of Probable D-xylulose reductase A (xdhA) from Aspergillus fumigatus (strain CBS 144.89 / FGSC A1163 / CEA10) (Neosartorya fumigata).